The following is a 242-amino-acid chain: Outer membrane protein class 4 (242 aa).

The N-terminal stretch at 1 to 22 (MTKQLKLSALFVALLASGTAVA) is a signal peptide. 7 consecutive repeat copies span residues 69-70 (AP), 71-72 (EP), 73-74 (EP), 75-76 (EP), 77-78 (EP), 79-80 (AP), and 81-82 (AP). The tract at residues 69-82 (APEPEPEPEPAPAP) is 7 X 2 AA tandem repeats of X-P. Residues 92-229 (YVDETISLSA…RVDVKIRSIV (138 aa)) enclose the OmpA-like domain. An intrachain disulfide couples Cys-191 to Cys-214.

This sequence belongs to the outer membrane OOP (TC 1.B.6) superfamily. The C-terminus exists in a monomer-dimer equilibrium.

The protein localises to the cell outer membrane. This is Outer membrane protein class 4 from Neisseria meningitidis serogroup B (strain ATCC BAA-335 / MC58).